A 134-amino-acid chain; its full sequence is Putative cytochrome c oxidase subunit 6b-like (134 aa).

Residues 1–61 (MSSAQMDPHD…DSGRETDAAV (61 aa)) form a disordered region. 2 stretches are compositionally biased toward basic and acidic residues: residues 7-19 (DPHD…DISK) and 44-61 (ATFR…DAAV). Residues 71 to 114 (TRHCFNRFMQYHKCIEKNGRDANDCNNLRDYVRSICPEELVSKI) enclose the CHCH domain. Positions 74 to 84 (CFNRFMQYHKC) match the Cx9C motif motif. Disulfide bonds link cysteine 74–cysteine 106 and cysteine 84–cysteine 95. The short motif at 95–106 (CNNLRDYVRSIC) is the Cx10C motif element.

Belongs to the cytochrome c oxidase subunit 6B (TC 3.D.4.8) family.

It localises to the mitochondrion. This protein is one of the nuclear-coded polypeptide chains of cytochrome c oxidase, the terminal oxidase in mitochondrial electron transport. This protein may be one of the heme-binding subunits of the oxidase. The sequence is that of Putative cytochrome c oxidase subunit 6b-like from Arabidopsis thaliana (Mouse-ear cress).